The sequence spans 98 residues: Ubiquitin-related modifier 1 (98 aa).

1-thioglycine is present on G98. G98 is covalently cross-linked (Glycyl lysine isopeptide (Gly-Lys) (interchain with K-? in acceptor proteins)).

The protein belongs to the URM1 family. Post-translationally, C-terminal thiocarboxylation occurs in 2 steps, it is first acyl-adenylated (-COAMP) via the hesA/moeB/thiF part of UBA4, then thiocarboxylated (-COSH) via the rhodanese domain of UBA4.

Its subcellular location is the cytoplasm. Its pathway is tRNA modification; 5-methoxycarbonylmethyl-2-thiouridine-tRNA biosynthesis. In terms of biological role, acts as a sulfur carrier required for 2-thiolation of mcm(5)S(2)U at tRNA wobble positions of cytosolic tRNA(Lys), tRNA(Glu) and tRNA(Gln). Serves as sulfur donor in tRNA 2-thiolation reaction by being thiocarboxylated (-COSH) at its C-terminus by the MOCS3 homolog UBA4. The sulfur is then transferred to tRNA to form 2-thiolation of mcm(5)S(2)U. Prior mcm(5) tRNA modification by the elongator complex is required for 2-thiolation. Also acts as a ubiquitin-like protein (UBL) that is covalently conjugated via an isopeptide bond to lysine residues of target proteins such as AHP1. The thiocarboxylated form serves as substrate for conjugation and oxidative stress specifically induces the formation of UBL-protein conjugates. The sequence is that of Ubiquitin-related modifier 1 from Candida glabrata (strain ATCC 2001 / BCRC 20586 / JCM 3761 / NBRC 0622 / NRRL Y-65 / CBS 138) (Yeast).